Consider the following 187-residue polypeptide: MAEDIEIDLDDLERRMKGAMDSLRAEFASLRTGRASASMVEPVQVEAYGQMTPINQVGTVNVPEPRMVTINVWDKGMVGKVEKAIRESGLGINPQTNGTIIMLPIPELNEERRRELTKVAAQYAEHARVAIRNVRRDGMDQIKKGKANGMPEDDQKFWETAVQELTDKSIGNVDQALEAKQAEIMQV.

It belongs to the RRF family.

It is found in the cytoplasm. Functionally, responsible for the release of ribosomes from messenger RNA at the termination of protein biosynthesis. May increase the efficiency of translation by recycling ribosomes from one round of translation to another. The chain is Ribosome-recycling factor from Paracoccus zeaxanthinifaciens.